A 147-amino-acid chain; its full sequence is Calmodulin (147 aa).

4 EF-hand domains span residues 8–43 (EQIA…LGLS), 44–79 (PSEA…QLKC), 81–116 (DSEQ…IGEK), and 120–147 (AEVD…LLSK). Residues D21, D23, S25, S27, E32, D57, D59, N61, E68, D94, N96, D98, and E105 each contribute to the Ca(2+) site.

This sequence belongs to the calmodulin family.

In terms of biological role, calmodulin mediates the control of a large number of enzymes, ion channels and other proteins by Ca(2+). Among the enzymes to be stimulated by the calmodulin-Ca(2+) complex are a number of protein kinases and phosphatases. The chain is Calmodulin (CMD1) from Kluyveromyces lactis (strain ATCC 8585 / CBS 2359 / DSM 70799 / NBRC 1267 / NRRL Y-1140 / WM37) (Yeast).